Consider the following 454-residue polypeptide: UPF0210 protein Cphy_2797 (454 aa).

Belongs to the UPF0210 family. As to quaternary structure, homodimer.

This Lachnoclostridium phytofermentans (strain ATCC 700394 / DSM 18823 / ISDg) (Clostridium phytofermentans) protein is UPF0210 protein Cphy_2797.